An 806-amino-acid polypeptide reads, in one-letter code: Leucine--tRNA ligase (806 aa).

The 'HIGH' region motif lies at 38–48; the sequence is PYPSGEIHMGH. Positions 572-576 match the 'KMSKS' region motif; the sequence is KMSKS. An ATP-binding site is contributed by lysine 575.

The protein belongs to the class-I aminoacyl-tRNA synthetase family.

It localises to the cytoplasm. It catalyses the reaction tRNA(Leu) + L-leucine + ATP = L-leucyl-tRNA(Leu) + AMP + diphosphate. The polypeptide is Leucine--tRNA ligase (Helicobacter acinonychis (strain Sheeba)).